The primary structure comprises 749 residues: Basic juvenile hormone-suppressible protein 2 (749 aa).

An N-terminal signal peptide occupies residues 1–14; sequence MRAVLLFVVSLAAL.

The protein belongs to the hemocyanin family. As to expression, fat body, and hemolymph of larvae.

The protein is Basic juvenile hormone-suppressible protein 2 (BJSP-2) of Trichoplusia ni (Cabbage looper).